We begin with the raw amino-acid sequence, 93 residues long: Guanine nucleotide-binding protein subunit gamma 1 (93 aa).

The stretch at 12-52 (TRGRHRIQAELKKLEQEARFLEEELEELDKTDKVSAALQEL) forms a coiled coil. One can recognise a G protein gamma domain in the interval 20 to 93 (AELKKLEQEA…DLRRCKCWFL (74 aa)). Residue C88 is the site of S-palmitoyl cysteine attachment. A Cysteine methyl ester modification is found at C90. C90 carries S-farnesyl cysteine lipidation. A propeptide spans 91–93 (WFL) (removed in mature form).

In terms of assembly, g proteins are composed of 3 units, alpha, beta and gamma. Interacts with the beta subunit RGB1.

The protein localises to the cell membrane. In terms of biological role, guanine nucleotide-binding proteins (G proteins) are involved as modulators or transducers in various transmembrane signaling systems. In Oryza sativa subsp. indica (Rice), this protein is Guanine nucleotide-binding protein subunit gamma 1.